Consider the following 130-residue polypeptide: Small ribosomal subunit protein uS8 (130 aa).

It belongs to the universal ribosomal protein uS8 family. As to quaternary structure, part of the 30S ribosomal subunit.

Functionally, one of the primary rRNA binding proteins, it binds directly to 16S rRNA central domain where it helps coordinate assembly of the platform of the 30S subunit. The polypeptide is Small ribosomal subunit protein uS8 (Methanococcus aeolicus (strain ATCC BAA-1280 / DSM 17508 / OCM 812 / Nankai-3)).